A 593-amino-acid polypeptide reads, in one-letter code: MGLRRTSWMHFSALCRRAPLSTAPAAREQPAAGPGAEPVCGPAETARPPVPAVDFGNTQEAYRSRRSWELARSLLVLSLCASPALLARHEQLLHLARKLLGQRLFNTLMKMTFYGQFVAGEDQESIRPLIQHNRAFGVGSILDYGVEEDLTPEEAERTEMESCSSALERDGCGVSKREKQFQAHRAFGDRRDGVTSARTYFYASEAKCDSHMETFLHCIEASGGASEDGFSAIKLTALGRPQFLLQFSDMLTKWRRFFHHVAAEQGKAGLAAVDTKLEVAALQESVVKMGIASRAEIEDWFTAETLGVSGTLDLLDWCSLIDSRTELSRHLVVPNMQTGRLEPLLSQFTEEEERQMTRMLQRMDVLAKKANQVGVRLMVDAEQTYFQPAISRLTLEMQRRFNVERPLIFNTFQCYLRDAYDNVILDVELARREGWCFGAKLVRGAYMAQVGYEDPINPTYEATSAVYHRCLDYVLEELKHNARAAVMVASHNEDTVRFTLRRMEELGLHPADRQVYFGQLLGMCDHISFPLGQAGFPVYKYVPYGPVMEVLPYLSRRALENSGVMKGAQRERQLLWQELKRRLCTRSLFHQPA.

The disordered stretch occupies residues 24–44; that stretch reads PAAREQPAAGPGAEPVCGPAE. 2 positions are modified to N6-acetyllysine: Lys368 and Lys479.

The protein belongs to the proline oxidase family. The cofactor is FAD.

Its subcellular location is the mitochondrion matrix. The catalysed reaction is L-proline + a quinone = (S)-1-pyrroline-5-carboxylate + a quinol + H(+). Its pathway is amino-acid degradation; L-proline degradation into L-glutamate; L-glutamate from L-proline: step 1/2. Functionally, converts proline to delta-1-pyrroline-5-carboxylate. The chain is Proline dehydrogenase 1, mitochondrial from Bos taurus (Bovine).